A 526-amino-acid polypeptide reads, in one-letter code: ATP synthase subunit alpha (526 aa).

171–178 (GDRQTGKT) is a binding site for ATP.

This sequence belongs to the ATPase alpha/beta chains family. As to quaternary structure, F-type ATPases have 2 components, CF(1) - the catalytic core - and CF(0) - the membrane proton channel. CF(1) has five subunits: alpha(3), beta(3), gamma(1), delta(1), epsilon(1). CF(0) has four main subunits: a, b, b' and c.

It localises to the cell inner membrane. The catalysed reaction is ATP + H2O + 4 H(+)(in) = ADP + phosphate + 5 H(+)(out). Produces ATP from ADP in the presence of a proton gradient across the membrane. The alpha chain is a regulatory subunit. The chain is ATP synthase subunit alpha from Chlorobium limicola (strain DSM 245 / NBRC 103803 / 6330).